Consider the following 270-residue polypeptide: Undecaprenyl-diphosphatase 2 (270 aa).

8 helical membrane passes run 1-21, 39-59, 87-107, 114-134, 147-167, 190-210, 221-241, and 247-267; these read MDLIQIIVLAIVQGLTEFLPV, QGLAFDVAVHLGTLAAVVWYF, WAVILGTIPAGIAGLLFKGFI, PLVIAWATIGFGLLLWWSDVV, LSWKDILLIGCAQALALIPGT, FSFLLSIPIIVLASGLSTLDL, AMGLGVVLSAISAYLCIHFFL, and VGMLPFVIYRLILGAVLLVLF.

Belongs to the UppP family.

It localises to the cell inner membrane. The enzyme catalyses di-trans,octa-cis-undecaprenyl diphosphate + H2O = di-trans,octa-cis-undecaprenyl phosphate + phosphate + H(+). Catalyzes the dephosphorylation of undecaprenyl diphosphate (UPP). Confers resistance to bacitracin. The polypeptide is Undecaprenyl-diphosphatase 2 (Stutzerimonas stutzeri (strain A1501) (Pseudomonas stutzeri)).